The sequence spans 691 residues: Elongation factor G (691 aa).

One can recognise a tr-type G domain in the interval 8 to 283 (EKQRNIGIMA…AVVQYLPSPL (276 aa)). Residues 17-24 (AHIDAGKT), 81-85 (DTPGH), and 135-138 (NKMD) each bind GTP.

It belongs to the TRAFAC class translation factor GTPase superfamily. Classic translation factor GTPase family. EF-G/EF-2 subfamily.

It localises to the cytoplasm. Catalyzes the GTP-dependent ribosomal translocation step during translation elongation. During this step, the ribosome changes from the pre-translocational (PRE) to the post-translocational (POST) state as the newly formed A-site-bound peptidyl-tRNA and P-site-bound deacylated tRNA move to the P and E sites, respectively. Catalyzes the coordinated movement of the two tRNA molecules, the mRNA and conformational changes in the ribosome. This chain is Elongation factor G, found in Lawsonia intracellularis (strain PHE/MN1-00).